We begin with the raw amino-acid sequence, 335 residues long: Tetraacyldisaccharide 4'-kinase (335 aa).

Position 58–65 (58–65 (VVGGSGKT)) interacts with ATP.

It belongs to the LpxK family.

The catalysed reaction is a lipid A disaccharide + ATP = a lipid IVA + ADP + H(+). It functions in the pathway glycolipid biosynthesis; lipid IV(A) biosynthesis; lipid IV(A) from (3R)-3-hydroxytetradecanoyl-[acyl-carrier-protein] and UDP-N-acetyl-alpha-D-glucosamine: step 6/6. Functionally, transfers the gamma-phosphate of ATP to the 4'-position of a tetraacyldisaccharide 1-phosphate intermediate (termed DS-1-P) to form tetraacyldisaccharide 1,4'-bis-phosphate (lipid IVA). In Hydrogenovibrio crunogenus (strain DSM 25203 / XCL-2) (Thiomicrospira crunogena), this protein is Tetraacyldisaccharide 4'-kinase.